The following is a 73-amino-acid chain: Beta-1 adrenergic receptor (73 aa).

The helical transmembrane segment at 1–12 threads the bilayer; that stretch reads ISALVSFLPILM. Residues 13–38 lie on the Extracellular side of the membrane; it reads HWWRAENDEARRCYNDPKCCDFVTNR. A disulfide bridge links Cys-25 with Cys-31. Residues 39–64 traverse the membrane as a helical segment; the sequence is AYAIASSVVSFYVPLCIMAFVYLRVF. Ser-44 lines the cyanopindolol pocket. At 65–73 the chain is on the cytoplasmic side; that stretch reads REAQKQVKK.

This sequence belongs to the G-protein coupled receptor 1 family. Adrenergic receptor subfamily. ADRB1 sub-subfamily. In terms of assembly, interacts (via C-terminus PDZ motif) with RAPGEF2; the interaction is direct. Interacts with GOPC, MAGI3 and DLG4. Homologous desensitization of the receptor is mediated by its phosphorylation by beta-adrenergic receptor kinase.

It localises to the cell membrane. Its subcellular location is the early endosome. Its function is as follows. Beta-adrenergic receptors mediate the catecholamine-induced activation of adenylate cyclase through the action of G proteins. This receptor binds epinephrine and norepinephrine with approximately equal affinity. Mediates Ras activation through G(s)-alpha- and cAMP-mediated signaling. In dorsal pons neurons, involved in the regulation of sleep/wake behaviors. The protein is Beta-1 adrenergic receptor (ADRB1) of Meriones unguiculatus (Mongolian jird).